A 220-amino-acid chain; its full sequence is Ribosome maturation factor RimP (220 aa).

Positions 173-220 (KKDKEERRQRKKARRRGEKGGVGDDGTAGEEQPDSAREGPARSASEGE) are disordered.

It belongs to the RimP family.

Its subcellular location is the cytoplasm. Required for maturation of 30S ribosomal subunits. This is Ribosome maturation factor RimP from Chelativorans sp. (strain BNC1).